Reading from the N-terminus, the 632-residue chain is Chaperone protein HtpG (632 aa).

The tract at residues Met-1 to Arg-345 is a; substrate-binding. The b stretch occupies residues Glu-346–Arg-561. Residues Leu-562–His-632 are c.

Belongs to the heat shock protein 90 family. In terms of assembly, homodimer.

It localises to the cytoplasm. In terms of biological role, molecular chaperone. Has ATPase activity. This is Chaperone protein HtpG from Chromohalobacter salexigens (strain ATCC BAA-138 / DSM 3043 / CIP 106854 / NCIMB 13768 / 1H11).